We begin with the raw amino-acid sequence, 460 residues long: MSFDFIKDRDKKVHFIGIGGISMSGLAAVLLNSGYKVSGSDFKESEILKKLRLSGADIYIGHSEKNIKDVDLVVYTAAIPENNPELIYAKENNIDLMNRAEFLGNIMKGHKYNVAISGAHGKTTCTSMLSNITLKANLDPTILVGGELDIIGGNFRIGSSDYFITEACEYKRSFLSFFPYVGVILNIDADHLDYYKDIDEITETFGQFADLIPNDGYLIGYIGDSRVKEILSKAKCNTLSYGFENADVTARNITFNEKGCASFDVYKHNDKLFDLTLSNPGEHNILNALSSICVSLIFDVNYDDIICGLSECKGAHKRFEYKGEVNGVTVIDDYAHHPVEIKATLNTSKKIPHNKTFCVFQPHTYTRTKTLFDEFTDAFFDADEVVLMDIYAAREKDTGLVSSNDLGVALRAKGVKCTNVHSHDEALEYLKNSAKPNDLLLTVGAGDVVIVGEKYLNQGK.

118 to 124 is a binding site for ATP; sequence GAHGKTT.

The protein belongs to the MurCDEF family.

Its subcellular location is the cytoplasm. It carries out the reaction UDP-N-acetyl-alpha-D-muramate + L-alanine + ATP = UDP-N-acetyl-alpha-D-muramoyl-L-alanine + ADP + phosphate + H(+). The protein operates within cell wall biogenesis; peptidoglycan biosynthesis. In terms of biological role, cell wall formation. The chain is UDP-N-acetylmuramate--L-alanine ligase from Clostridium botulinum (strain Alaska E43 / Type E3).